The primary structure comprises 262 residues: tRNA pseudouridine synthase A (262 aa).

The Nucleophile role is filled by Asp-51. Tyr-109 serves as a coordination point for substrate.

The protein belongs to the tRNA pseudouridine synthase TruA family. As to quaternary structure, homodimer.

It carries out the reaction uridine(38/39/40) in tRNA = pseudouridine(38/39/40) in tRNA. Formation of pseudouridine at positions 38, 39 and 40 in the anticodon stem and loop of transfer RNAs. The sequence is that of tRNA pseudouridine synthase A from Legionella pneumophila (strain Paris).